The primary structure comprises 925 residues: Serine/threonine-protein kinase PLK4 (925 aa).

Positions 12–265 constitute a Protein kinase domain; that stretch reads FKVGNLLGKG…LSSVLDHPFM (254 aa). ATP is bound by residues 18–26 and Lys-41; that span reads LGKGSFAGV. N6-acetyllysine occurs at positions 45 and 46. The active-site Proton acceptor is Asp-136. Disordered regions lie at residues 262 to 283 and 328 to 394; these read HPFMSRNPSPKSKDVGTVEDSM and KNSS…KTYS. The span at 330-341 shows a compositional bias: low complexity; the sequence is SSDFSSGDGSNF. The span at 342–353 shows a compositional bias: polar residues; the sequence is CTQWGNPEQEAN. Over residues 359–369 the composition is skewed to basic and acidic residues; the sequence is RVIEDAEERPH. Residues 381 to 391 are compositionally biased toward polar residues; it reads RASPSNQSRAK. Ser-400 carries the post-translational modification Phosphoserine. Residues 517 to 538 form a disordered region; that stretch reads EVMPQEPGLHPHSEQSKNRSME. Residues 525–536 are compositionally biased toward basic and acidic residues; sequence LHPHSEQSKNRS. A Cryptic POLO box 1 (CPB1) domain is found at 547–660; sequence TLRSITSPLI…SRFIQLVRSK (114 aa). The Cryptic POLO box 2 (CPB2) domain occupies 661 to 774; sequence TPKITYFTRY…GRKPGNTSSP (114 aa). Ser-778 carries the post-translational modification Phosphoserine. The POLO box domain occupies 841 to 919; sequence QLLKSVFVKN…LSSILLMFSN (79 aa).

It belongs to the protein kinase superfamily. Ser/Thr protein kinase family. CDC5/Polo subfamily. Homodimer. Interacts with CEP152 (via N-terminus). Interacts with CEP78; this interaction may be important for proper PLK4 localization to the centriole and PLK4-induced overduplication of centrioles. Interacts with CEP131. Interacts simultaneously with TENT5C and CEP192. Interacts with TENT5C; this interaction leads to the TENT5C recruitment in the centrosome. Interacts with CEP85; this interaction may be important in cell migration and centriole assembly. Post-translationally, ubiquitinated; leading to its degradation by the proteasome. Deubiquitinated by USP54; leading to PLK4 stabilization. Tyrosine-phosphorylated by TEC. In terms of processing, acetylation by KAT2A and KAT2B impairs kinase activity by shifting the kinase to an inactive conformation. In terms of tissue distribution, expressed in tissues associated with mitotic and meiotic cell division. Highly expressed in testis.

The protein localises to the cytoplasm. The protein resides in the cytoskeleton. Its subcellular location is the microtubule organizing center. It localises to the centrosome. It is found in the centriole. The protein localises to the nucleus. The protein resides in the nucleolus. Its subcellular location is the cleavage furrow. The catalysed reaction is L-seryl-[protein] + ATP = O-phospho-L-seryl-[protein] + ADP + H(+). The enzyme catalyses L-threonyl-[protein] + ATP = O-phospho-L-threonyl-[protein] + ADP + H(+). Serine/threonine-protein kinase that plays a central role in centriole duplication. Able to trigger procentriole formation on the surface of the parental centriole cylinder, leading to the recruitment of centriole biogenesis proteins such as SASS6, CPAP, CCP110, CEP135 and gamma-tubulin. When overexpressed, it is able to induce centrosome amplification through the simultaneous generation of multiple procentrioles adjoining each parental centriole during S phase. Phosphorylates 'Ser-151' of FBXW5 during the G1/S transition, leading to inhibit FBXW5 ability to ubiquitinate SASS6. Its central role in centriole replication suggests a possible role in tumorigenesis, centrosome aberrations being frequently observed in tumors. Phosphorylates CDC25C and CHEK2. Also involved in deuterosome-mediated centriole amplification in multiciliated that can generate more than 100 centrioles. Also involved in trophoblast differentiation by phosphorylating HAND1, leading to disrupt the interaction between HAND1 and MDFIC and activate HAND1. Required for the recruitment of STIL to the centriole and for STIL-mediated centriole amplification. Phosphorylates CEP131 at 'Ser-78' and PCM1 at 'Ser-372' which is essential for proper organization and integrity of centriolar satellites. In Mus musculus (Mouse), this protein is Serine/threonine-protein kinase PLK4.